A 61-amino-acid polypeptide reads, in one-letter code: uncharacterized protein (61 aa).

Residues Thr-34–Glu-61 adopt a coiled-coil conformation.

This is an uncharacterized protein from Bacillus subtilis (strain 168).